A 392-amino-acid chain; its full sequence is HORMA domain-containing protein 1 (392 aa).

Residues 25-227 (QQSLMFVKRL…TPFHTFRLKV (203 aa)) form the HORMA domain. Disordered regions lie at residues 271–292 (IKTK…EPNL) and 371–392 (LESS…NEHT). Phosphoserine is present on S374. Positions 381–384 (KRRR) match the Nuclear localization signal motif.

Interacts with HORMAD2. Interacts with IHO1. Phosphorylated at Ser-375 in a SPO11-dependent manner.

The protein localises to the nucleus. It localises to the chromosome. Functionally, plays a key role in meiotic progression. Regulates 3 different functions during meiosis: ensures that sufficient numbers of processed DNA double-strand breaks (DSBs) are available for successful homology search by increasing the steady-state numbers of single-stranded DSB ends. Promotes synaptonemal-complex formation independently of its role in homology search. Plays a key role in the male mid-pachytene checkpoint and the female meiotic prophase checkpoint: required for efficient build-up of ATR activity on unsynapsed chromosome regions, a process believed to form the basis of meiotic silencing of unsynapsed chromatin (MSUC) and meiotic prophase quality control in both sexes. This chain is HORMA domain-containing protein 1 (Hormad1), found in Rattus norvegicus (Rat).